The chain runs to 183 residues: MADVRTHSHQLQVHPQRQHEGGIKVLYPQSGPSSTQVLAVFVGVPIGGTLLTIAGLTLAGSVIGLMLAFPLFLIFSPVIVPAAFVIGLAMTGFLASGAIGLTGLSSMSWVLNYIRRAGQHIPEELEEAKHRLADMAEYVGQRTKDAGQTIEDKAHDVREAKTFDVRDRDTTKGTHNVRDTKTT.

The polar stretch occupies residues 1-39; sequence MADVRTHSHQLQVHPQRQHEGGIKVLYPQSGPSSTQVLA. A run of 3 helical transmembrane segments spans residues 37 to 57, 66 to 86, and 87 to 107; these read VLAV…AGLT, MLAF…AFVI, and GLAM…LSSM. Residues 40-113 are hydrophobic; the sequence is VFVGVPIGGT…LSSMSWVLNY (74 aa). The interval 144 to 183 is disordered; that stretch reads KDAGQTIEDKAHDVREAKTFDVRDRDTTKGTHNVRDTKTT.

The protein belongs to the oleosin family.

It is found in the lipid droplet. It localises to the membrane. Its function is as follows. May have a structural role to stabilize the lipid body during desiccation of the seed by preventing coalescence of the oil. Probably interacts with both lipid and phospholipid moieties of lipid bodies. May also provide recognition signals for specific lipase anchorage in lipolysis during seedling growth. This Arabidopsis thaliana (Mouse-ear cress) protein is Oleosin 5.